A 66-amino-acid chain; its full sequence is Large ribosomal subunit protein bL33c (66 aa).

Belongs to the bacterial ribosomal protein bL33 family.

The protein resides in the plastid. It localises to the chloroplast. The polypeptide is Large ribosomal subunit protein bL33c (Fagopyrum esculentum subsp. ancestrale (Wild buckwheat)).